A 162-amino-acid polypeptide reads, in one-letter code: HTH-type transcriptional regulator IscR (162 aa).

Positions arginine 2–asparagine 131 constitute an HTH rrf2-type domain. The segment at residues leucine 28–lysine 51 is a DNA-binding region (H-T-H motif). [2Fe-2S] cluster-binding residues include cysteine 92, cysteine 98, and cysteine 104. The disordered stretch occupies residues glycine 140–alanine 162. Residues histidine 143–alanine 162 are compositionally biased toward basic and acidic residues.

[2Fe-2S] cluster serves as cofactor.

In terms of biological role, regulates the transcription of several operons and genes involved in the biogenesis of Fe-S clusters and Fe-S-containing proteins. The chain is HTH-type transcriptional regulator IscR from Shigella flexneri.